The primary structure comprises 791 residues: GDH/6PGL endoplasmic bifunctional protein (791 aa).

The signal sequence occupies residues 1 to 19 (MWNMLIVAMCLALLGCLQA). Gln-20 carries the pyrrolidone carboxylic acid modification. Residues 20–526 (QELQGHVSII…SGRLFFSQQQ (507 aa)) form a hexose-6-phosphate dehydrogenase region. NADP(+) is bound by residues 32 to 39 (GATGDLAK) and Tyr-149. N-linked (GlcNAc...) asparagine glycosylation is present at Asn-157. An NADP(+)-binding site is contributed by Lys-174. D-glucose 6-phosphate is bound by residues Lys-174, 204-208 (HYLGK), Glu-243, and Asp-262. Lys-208 is subject to N6-succinyllysine. The active-site Proton acceptor is His-267. An N-linked (GlcNAc...) asparagine glycan is attached at Asn-282. Lys-360 and Arg-365 together coordinate D-glucose 6-phosphate. Arg-370 serves as a coordination point for NADP(+). The segment at 527-540 (PEQLVPGPGPAPMP) is linker. The tract at residues 541-791 (SDFQVLRAKY…WYMDYDAFLG (251 aa)) is 6-phosphogluconolactonase. Trp-617 provides a ligand contact to NADP(+). The N-linked (GlcNAc...) asparagine glycan is linked to Asn-683.

In the N-terminal section; belongs to the glucose-6-phosphate dehydrogenase family. The protein in the C-terminal section; belongs to the glucosamine/galactosamine-6-phosphate isomerase family. 6-phosphogluconolactonase subfamily. Homodimer. Present in most tissues examined, strongest in liver.

The protein resides in the endoplasmic reticulum lumen. It catalyses the reaction D-glucose 6-phosphate + NADP(+) = 6-phospho-D-glucono-1,5-lactone + NADPH + H(+). It carries out the reaction D-glucose 6-phosphate + NAD(+) = 6-phospho-D-glucono-1,5-lactone + NADH + H(+). The catalysed reaction is 6-phospho-D-glucono-1,5-lactone + H2O = 6-phospho-D-gluconate + H(+). The enzyme catalyses 2-deoxy-D-glucose 6-phosphate + NAD(+) = 2-deoxy-6-phospho-D-glucono-1,5-lactone + NADH + H(+). It catalyses the reaction 2-deoxy-D-glucose 6-phosphate + NADP(+) = 2-deoxy-6-phospho-D-glucono-1,5-lactone + NADPH + H(+). It carries out the reaction D-galactose 6-phosphate + NADP(+) = 6-phospho-D-galactono-1,5-lactone + NADPH + H(+). The catalysed reaction is D-galactose 6-phosphate + NAD(+) = 6-phospho-D-galactono-1,5-lactone + NADH + H(+). The enzyme catalyses D-glucosamine 6-phosphate + NADP(+) = 2-amino-2-deoxy-6-phospho-D-glucono-1,5-lactone + NADPH + 2 H(+). It catalyses the reaction D-glucose + NAD(+) = D-glucono-1,5-lactone + NADH + H(+). It carries out the reaction D-glucose + NADP(+) = D-glucono-1,5-lactone + NADPH + H(+). The catalysed reaction is D-glucose 6-sulfate + NADP(+) = 6-sulfo-D-glucono-1,5-lactone + NADPH + H(+). Its pathway is carbohydrate degradation; pentose phosphate pathway; D-ribulose 5-phosphate from D-glucose 6-phosphate (oxidative stage): step 1/3. It participates in carbohydrate degradation; pentose phosphate pathway; D-ribulose 5-phosphate from D-glucose 6-phosphate (oxidative stage): step 2/3. The protein operates within carbohydrate degradation; pentose phosphate pathway; D-ribulose 5-phosphate from D-glucose 6-phosphate (oxidative stage). Its function is as follows. Bifunctional enzyme localized in the lumen of the endoplasmic reticulum that catalyzes the first two steps of the oxidative branch of the pentose phosphate pathway/shunt, an alternative to glycolysis and a major source of reducing power and metabolic intermediates for biosynthetic processes. Has a hexose-6-phosphate dehydrogenase activity, with broad substrate specificity compared to glucose-6-phosphate 1-dehydrogenase/G6PD, and catalyzes the first step of the pentose phosphate pathway. In addition, acts as a 6-phosphogluconolactonase and catalyzes the second step of the pentose phosphate pathway. May have a dehydrogenase activity for alternative substrates including glucosamine 6-phosphate and glucose 6-sulfate. The main function of this enzyme is to provide reducing equivalents such as NADPH to maintain the adequate levels of reductive cofactors in the oxidizing environment of the endoplasmic reticulum. By producing NADPH that is needed by reductases of the lumen of the endoplasmic reticulum like corticosteroid 11-beta-dehydrogenase isozyme 1/HSD11B1, indirectly regulates their activity. This Homo sapiens (Human) protein is GDH/6PGL endoplasmic bifunctional protein.